The chain runs to 310 residues: ER-derived vesicles protein ERV29 (310 aa).

At Met-1–Tyr-108 the chain is on the cytoplasmic side. The disordered stretch occupies residues Gly-11 to Asn-31. Residues Phe-109 to Leu-129 traverse the membrane as a helical segment. The Lumenal segment spans residues Val-130–Tyr-137. A helical membrane pass occupies residues Ala-138 to Gly-158. At Ser-159–Arg-209 the chain is on the cytoplasmic side. A helical transmembrane segment spans residues Ile-210 to Leu-230. Residues Thr-231–Lys-245 are Lumenal-facing. Residues Phe-246 to Trp-266 form a helical membrane-spanning segment. Residues Phe-267–Tyr-310 lie on the Cytoplasmic side of the membrane. A Di-lysine motif motif is present at residues Lys-307–Tyr-310.

This sequence belongs to the SURF4 family.

It is found in the endoplasmic reticulum membrane. Functionally, constituent of COPII-coated endoplasmic reticulum-derived transport vesicles. Required for efficient transport of a subset of secretory proteins to the Golgi. The C-terminal di-lysine motif is required for exit from the endoplasmic reticulum. Required directly for packaging glycosylated pro-alpha-factor into COPII vesicles. Facilitates retrograde transport from the Golgi to the endoplasmic reticulum. This Saccharomyces cerevisiae (strain ATCC 204508 / S288c) (Baker's yeast) protein is ER-derived vesicles protein ERV29 (ERV29).